Here is a 380-residue protein sequence, read N- to C-terminus: Queuine tRNA-ribosyltransferase (380 aa).

The active-site Proton acceptor is D96. Substrate-binding positions include 96 to 100, D150, Q193, and G220; that span reads DSGGF. Positions 251 to 257 are RNA binding; sequence GVGAPDS. The Nucleophile role is filled by D270. The tract at residues 275-279 is RNA binding; important for wobble base 34 recognition; that stretch reads TRIAR. Zn(2+) is bound by residues C308, C310, C313, and H339.

The protein belongs to the queuine tRNA-ribosyltransferase family. Homodimer. Within each dimer, one monomer is responsible for RNA recognition and catalysis, while the other monomer binds to the replacement base PreQ1. It depends on Zn(2+) as a cofactor.

The catalysed reaction is 7-aminomethyl-7-carbaguanine + guanosine(34) in tRNA = 7-aminomethyl-7-carbaguanosine(34) in tRNA + guanine. The protein operates within tRNA modification; tRNA-queuosine biosynthesis. In terms of biological role, catalyzes the base-exchange of a guanine (G) residue with the queuine precursor 7-aminomethyl-7-deazaguanine (PreQ1) at position 34 (anticodon wobble position) in tRNAs with GU(N) anticodons (tRNA-Asp, -Asn, -His and -Tyr). Catalysis occurs through a double-displacement mechanism. The nucleophile active site attacks the C1' of nucleotide 34 to detach the guanine base from the RNA, forming a covalent enzyme-RNA intermediate. The proton acceptor active site deprotonates the incoming PreQ1, allowing a nucleophilic attack on the C1' of the ribose to form the product. After dissociation, two additional enzymatic reactions on the tRNA convert PreQ1 to queuine (Q), resulting in the hypermodified nucleoside queuosine (7-(((4,5-cis-dihydroxy-2-cyclopenten-1-yl)amino)methyl)-7-deazaguanosine). In Streptococcus pyogenes serotype M6 (strain ATCC BAA-946 / MGAS10394), this protein is Queuine tRNA-ribosyltransferase.